The sequence spans 627 residues: uncharacterized protein (627 aa).

Disordered regions lie at residues 57–82 (EDAM…QGED), 96–121 (PEAQ…APPG), 160–184 (GCSH…DAAY), 198–232 (AQSQ…CPSG), 247–277 (SHDA…RGAP), 335–358 (RQAG…EAAY), and 449–579 (VFDV…PPLS). The span at 169 to 183 (SSSDQAADAPAGDAA) shows a compositional bias: low complexity. Residues 336 to 357 (QAGAEPAQAPATAPAPEGTEAA) show a composition bias toward low complexity. Residues 450 to 464 (FDVKEQGAHADRDAA) show a composition bias toward basic and acidic residues.

This is an uncharacterized protein from Treponema pallidum (strain Nichols).